The following is a 507-amino-acid chain: MTSTFMGLETARRALSAQQAALSTTANNVANANTDGYTRQRVSLEATDYFPAVSKNAEKTAGQMGTGVQGKSVERIRDIFLDYQYRLQNNSAGYYDTKAKALSQMEGVLNETDDSGLNSVLNSFWNSLQELSNNTNEESARSVVARKGQAVAETFNYISESLTNVQSNLKAELNTTVLDVNSLLSQLNSLNKQIAQVEPVGLLPNGLYDQRDLLIDKLSSMVDIKVSYNKSGGNALASAEGTVSIEILDKNKQSLGTVLDGKNYEVSELAANYDNETGLVSSISIGDTAVQAESFSSKGSLLGFIESYGYITADGQEKGVYPEMLSDLDNMALEFAKAFNEVHRNGVTKSGEQGGDFFDFTGGETEPAKGAAGKIKVADSIIDSKGANIAFSLTGAANDNANATKLANVLTGKITINGKETSVLDYYAGLIGELGIEAQEANRLASNTETQLNDADINRQQMSAVSLDEEMTNMIQFQHAYNAAARMVTLQDELLDKVINGMGVGGR.

Belongs to the flagella basal body rod proteins family.

The protein resides in the secreted. It localises to the bacterial flagellum. This Bacillus subtilis (strain 168) protein is Flagellar hook-associated protein 1 (flgK).